The following is a 67-amino-acid chain: Large ribosomal subunit protein uL29 (67 aa).

Belongs to the universal ribosomal protein uL29 family.

In Sulfurihydrogenibium sp. (strain YO3AOP1), this protein is Large ribosomal subunit protein uL29.